Reading from the N-terminus, the 201-residue chain is Probable GTP-binding protein EngB (201 aa).

Residues 22-197 form the EngB-type G domain; it reads TFPEYAFIGR…LNYIESINKE (176 aa). Residues 30–37, 57–61, 75–78, 142–145, and 175–178 contribute to the GTP site; these read GRSNVGKS, GKTML, DLPG, TKAD, and ITSS. 2 residues coordinate Mg(2+): serine 37 and threonine 59.

The protein belongs to the TRAFAC class TrmE-Era-EngA-EngB-Septin-like GTPase superfamily. EngB GTPase family. Mg(2+) is required as a cofactor.

Functionally, necessary for normal cell division and for the maintenance of normal septation. The protein is Probable GTP-binding protein EngB of Bacteroides fragilis (strain YCH46).